We begin with the raw amino-acid sequence, 486 residues long: Glutamyl-tRNA(Gln) amidotransferase subunit A (486 aa).

Residues K75 and S150 each act as charge relay system in the active site. The Acyl-ester intermediate role is filled by S174.

The protein belongs to the amidase family. GatA subfamily. As to quaternary structure, heterotrimer of A, B and C subunits.

It carries out the reaction L-glutamyl-tRNA(Gln) + L-glutamine + ATP + H2O = L-glutaminyl-tRNA(Gln) + L-glutamate + ADP + phosphate + H(+). In terms of biological role, allows the formation of correctly charged Gln-tRNA(Gln) through the transamidation of misacylated Glu-tRNA(Gln) in organisms which lack glutaminyl-tRNA synthetase. The reaction takes place in the presence of glutamine and ATP through an activated gamma-phospho-Glu-tRNA(Gln). The protein is Glutamyl-tRNA(Gln) amidotransferase subunit A of Nostoc punctiforme (strain ATCC 29133 / PCC 73102).